The sequence spans 510 residues: 2,3-bisphosphoglycerate-independent phosphoglycerate mutase (510 aa).

Residues Asp12 and Ser62 each contribute to the Mn(2+) site. Ser62 functions as the Phosphoserine intermediate in the catalytic mechanism. Substrate is bound by residues His123, 152-153 (RD), Arg184, Arg190, 257-260 (RADR), and Lys331. The Mn(2+) site is built by Asp399, His403, Asp440, His441, and His458.

It belongs to the BPG-independent phosphoglycerate mutase family. Monomer. Mn(2+) is required as a cofactor.

The enzyme catalyses (2R)-2-phosphoglycerate = (2R)-3-phosphoglycerate. The protein operates within carbohydrate degradation; glycolysis; pyruvate from D-glyceraldehyde 3-phosphate: step 3/5. Catalyzes the interconversion of 2-phosphoglycerate and 3-phosphoglycerate. The chain is 2,3-bisphosphoglycerate-independent phosphoglycerate mutase from Lawsonia intracellularis (strain PHE/MN1-00).